The primary structure comprises 562 residues: Phosphoglucomutase-1 (562 aa).

Residue methionine 1 is modified to N-acetylmethionine. Residue lysine 16 is modified to N6-acetyllysine. Arginine 23 is an alpha-D-glucose 1,6-bisphosphate binding site. Position 115 is a phosphothreonine (threonine 115). Position 117 (serine 117) interacts with alpha-D-glucose 1,6-bisphosphate. Catalysis depends on serine 117, which acts as the Phosphoserine intermediate. Position 117 (serine 117) interacts with Mg(2+). Residues serine 117 and serine 134 each carry the phosphoserine modification. The residue at position 185 (threonine 185) is a Phosphothreonine. Serine 201, serine 206, and serine 213 each carry phosphoserine. The Mg(2+) site is built by aspartate 288, aspartate 290, and aspartate 292. 2 residues coordinate alpha-D-glucose 1,6-bisphosphate: aspartate 292 and arginine 293. The residue at position 349 (lysine 349) is an N6-acetyllysine. A Phosphotyrosine modification is found at tyrosine 353. Threonine 357 is a binding site for alpha-D-glucose 1,6-bisphosphate. Serine 369 is subject to Phosphoserine. 3 residues coordinate alpha-D-glucose 1,6-bisphosphate: glutamate 376, serine 378, and lysine 389. Serine 378 carries the phosphoserine modification. N6-succinyllysine is present on lysine 419. Threonine 467 is subject to Phosphothreonine; by PAK1. Serine 477, serine 485, and serine 505 each carry phosphoserine. At threonine 507 the chain carries Phosphothreonine. Residues serine 509 and serine 541 each carry the phosphoserine modification.

This sequence belongs to the phosphohexose mutase family. As to quaternary structure, monomer. Mg(2+) serves as cofactor. Phosphorylation at Thr-467 by PAK1 significantly enhances enzymatic activity.

The protein resides in the cytoplasm. It catalyses the reaction alpha-D-glucose 1-phosphate = alpha-D-glucose 6-phosphate. It carries out the reaction O-phospho-L-seryl-[protein] + alpha-D-glucose 1-phosphate = alpha-D-glucose 1,6-bisphosphate + L-seryl-[protein]. The enzyme catalyses alpha-D-glucose 1,6-bisphosphate + L-seryl-[protein] = O-phospho-L-seryl-[protein] + alpha-D-glucose 6-phosphate. Glucose-1,6-bisphosphate enhances phosphorylation of the active site Ser-117, and thereby increases enzyme activity. Its function is as follows. Catalyzes the reversible isomerization of alpha-D-glucose 1-phosphate to alpha-D-glucose 6-phosphate. The mechanism proceeds via the intermediate compound alpha-D-glucose 1,6-bisphosphate. This enzyme participates in both the breakdown and synthesis of glucose. The chain is Phosphoglucomutase-1 (PGM1) from Homo sapiens (Human).